A 153-amino-acid chain; its full sequence is Alpha-amylase type B isozyme (153 aa).

Substrate is bound by residues Lys-19, 25-27, His-38, Gln-44, Lys-123, and Trp-150; that span reads GWW.

It belongs to the glycosyl hydrolase 13 family. As to quaternary structure, monomer. It depends on Ca(2+) as a cofactor.

The catalysed reaction is Endohydrolysis of (1-&gt;4)-alpha-D-glucosidic linkages in polysaccharides containing three or more (1-&gt;4)-alpha-linked D-glucose units.. The protein is Alpha-amylase type B isozyme (AMY1.4) of Hordeum vulgare (Barley).